Consider the following 457-residue polypeptide: MQKYTSEARQLLALAIPVILAQVAQTAMGFVDTVMAGGYSATDMAAVAIGTSIWLPAILFGHGLLLALTPVIAQLNGSGRRERIAHQVRQGFWLASFVSVLVMIVLWNAGYIIRSMHNIDPALADKAVGYLRALLWGAPGYLFFQVARNQCEGLAKTKPGMVMGFLGLLVNIPVNYIFIYGHFGMPELGGIGCGVATAAVYWVMFIAMLSYIKHARSMRDIRNEKSFGKPDSAVMKRLIQLGLPIALALFFEVTLFAVVALLVSPLGIVNVAGHQIALNFSSLMFVLPMSLAAAVTIRVGYRLGQGSTLDAQTAARTGLSVGVCMAVVTAIFTVTLRKHIALLYNDNPEVVSLAAQLMLLAAVYQISDSIQVIGSGILRGYKDTRSIFFITFTAYWVLGLPSGYILALTDLVVDRMGPAGFWMGFIIGLTSAAVLMMLRMRYLQRQPSSIILQRAAR.

Transmembrane regions (helical) follow at residues 11 to 31, 53 to 73, 93 to 113, 127 to 147, 160 to 180, 188 to 208, 243 to 263, 276 to 296, 314 to 334, 357 to 377, 387 to 407, and 418 to 438; these read LLALAIPVILAQVAQTAMGFV, IWLPAILFGHGLLLALTPVIA, WLASFVSVLVMIVLWNAGYII, AVGYLRALLWGAPGYLFFQVA, GMVMGFLGLLVNIPVNYIFIY, LGGIGCGVATAAVYWVMFIAM, LPIALALFFEVTLFAVVALLV, IALNFSSLMFVLPMSLAAAVT, AARTGLSVGVCMAVVTAIFTV, LMLLAAVYQISDSIQVIGSGI, IFFITFTAYWVLGLPSGYILA, and PAGFWMGFIIGLTSAAVLMML.

The protein belongs to the multi antimicrobial extrusion (MATE) (TC 2.A.66.1) family. MdtK subfamily.

It localises to the cell inner membrane. In terms of biological role, multidrug efflux pump that functions probably as a Na(+)/drug antiporter. This Salmonella arizonae (strain ATCC BAA-731 / CDC346-86 / RSK2980) protein is Multidrug resistance protein MdtK.